Consider the following 367-residue polypeptide: Serine/threonine-protein kinase-transforming protein Rmil (367 aa).

Positions Glu-1–Asp-64 are disordered. The segment covering Gln-33 to Ser-57 has biased composition (basic and acidic residues). Residues Ile-67–Leu-327 form the Protein kinase domain. ATP-binding positions include Ile-73–Val-81 and Lys-93. The active-site Proton acceptor is the Asp-186.

It belongs to the protein kinase superfamily. TKL Ser/Thr protein kinase family. RAF subfamily.

It catalyses the reaction L-seryl-[protein] + ATP = O-phospho-L-seryl-[protein] + ADP + H(+). The enzyme catalyses L-threonyl-[protein] + ATP = O-phospho-L-threonyl-[protein] + ADP + H(+). This chain is Serine/threonine-protein kinase-transforming protein Rmil (V-RMIL), found in Avian retrovirus IC10.